Reading from the N-terminus, the 249-residue chain is Coat protein (249 aa).

Residues 1-28 form a disordered region; sequence MVDSKKTETPQVVDASKKAENSKTSQAG.

It belongs to the potexvirus capsid protein family.

It localises to the virion. In terms of biological role, required for genome encapsidation. Forms ribonucleoprotein complexes along with TGB1 helicase and viral RNA. This Solanum tuberosum (Potato) protein is Coat protein.